A 402-amino-acid polypeptide reads, in one-letter code: Dynactin subunit 2 (402 aa).

The disordered stretch occupies residues 1–24 (MADPKYADLPGIARNEPDVYETSD). An N-acetylalanine modification is found at alanine 2. The residue at position 6 (tyrosine 6) is a Phosphotyrosine. Serine 83 is modified (phosphoserine). Phosphotyrosine is present on tyrosine 86. Residues 100–130 (QQKYQRLLHEVQELTTEVEKIKTTVKESATE) adopt a coiled-coil conformation. Threonine 134 and threonine 199 each carry phosphothreonine. The disordered stretch occupies residues 185 to 205 (KSSKGSSGGKSTGGTPPDSSL). The stretch at 215-247 (EQDKFSQAAKVAELEKRLTELEATVRCDQDAQN) forms a coiled coil. Serine 321 is subject to Phosphoserine.

This sequence belongs to the dynactin subunit 2 family. In terms of assembly, subunit of dynactin, a multiprotein complex part of a tripartite complex with dynein and a adapter, such as BICDL1, BICD2 or HOOK3. The dynactin complex is built around ACTR1A/ACTB filament and consists of an actin-related filament composed of a shoulder domain, a pointed end and a barbed end. Its length is defined by its flexible shoulder domain. The soulder is composed of 2 DCTN1 subunits, 4 DCTN2 and 2 DCTN3. The 4 DCNT2 (via N-terminus) bind the ACTR1A filament and act as molecular rulers to determine the length. The pointed end is important for binding dynein-dynactin cargo adapters and consists of 4 subunits: ACTR10, DCNT4, DCTN5 and DCTN6. The barbed end is composed of a CAPZA1:CAPZB heterodimers, which binds ACTR1A/ACTB filament and dynactin and stabilizes dynactin. Interacts with BICD2 and CEP135. Interacts with DYNAP. Interacts with ECPAS. Interacts with MAPRE1.

The protein resides in the cytoplasm. The protein localises to the cytoskeleton. It localises to the microtubule organizing center. It is found in the centrosome. Its subcellular location is the membrane. Part of the dynactin complex that activates the molecular motor dynein for ultra-processive transport along microtubules. In the dynactin soulder domain, binds the ACTR1A filament and acts as a molecular ruler to determine the length. Modulates cytoplasmic dynein binding to an organelle, and plays a role in prometaphase chromosome alignment and spindle organization during mitosis. Involved in anchoring microtubules to centrosomes. May play a role in synapse formation during brain development. This Rattus norvegicus (Rat) protein is Dynactin subunit 2 (Dctn2).